Here is a 78-residue protein sequence, read N- to C-terminus: Structural DNA-binding protein p10 (78 aa).

Residues 1-27 are compositionally biased toward low complexity; that stretch reads MPTKAGTKSTANKKTTKGSSKSGSSRG. Positions 1-41 are disordered; the sequence is MPTKAGTKSTANKKTTKGSSKSGSSRGHTGKTHASSSMHSG.

The protein belongs to the asfivirus P10 family.

Its subcellular location is the virion. In terms of biological role, may play a role in genome packaging through direct interaction with viral DNA. Binds to ssDNA and dsDNA with the same apparent affinity in vitro. The protein is Structural DNA-binding protein p10 of African swine fever virus (strain Badajoz 1971 Vero-adapted) (Ba71V).